The sequence spans 498 residues: Polygalacturonan/rhamnogalacturonan-binding protein YtcQ (498 aa).

A signal peptide spans 1-22; sequence MGNKWRVLLIVLVLALGGVLAG. The N-palmitoyl cysteine moiety is linked to residue Cys23. Cys23 carries S-diacylglycerol cysteine lipidation.

Belongs to the bacterial solute-binding protein 1 family. As to quaternary structure, the complex is probably composed of two ATP-binding proteins (MsmX), two transmembrane proteins (YtcP and YteP) and a solute-binding protein (YtcQ).

It localises to the cell membrane. In terms of biological role, involved in pectin degradation. Part of the ABC transporter complex YtcQP-YteP involved in the uptake of polygalacturonan and rhamnogalacturonan type I. In Bacillus subtilis (strain 168), this protein is Polygalacturonan/rhamnogalacturonan-binding protein YtcQ (ytcQ).